The primary structure comprises 309 residues: Metaxin-3 (309 aa).

Positions M274 to H309 are disordered. 2 stretches are compositionally biased toward polar residues: residues R280–S290 and N300–H309.

The protein belongs to the metaxin family. As to quaternary structure, part of a large protein complex spanning both mitochondrial membranes termed the mitochondrial intermembrane space bridging (MIB) complex.

The protein localises to the mitochondrion. Its subcellular location is the mitochondrion outer membrane. Its function is as follows. Could function in transport of proteins into the mitochondrion. The sequence is that of Metaxin-3 (mtx3) from Xenopus laevis (African clawed frog).